We begin with the raw amino-acid sequence, 46 residues long: Large ribosomal subunit protein bL34 (46 aa).

This sequence belongs to the bacterial ribosomal protein bL34 family.

The sequence is that of Large ribosomal subunit protein bL34 (rpmH) from Mycobacterium avium.